The primary structure comprises 419 residues: MIDLKLLRENPDVVRESQRIRGEDPALVDQLLEADEKRREAIKSADDLRAEHKAFGKKISQASPEERPALLEGSNELKSRVKAAEEAEAEALAKVNEIQMLFGNVVTDAPAGGEDDYIVLEHVGTPRTFDFEPKDHLDLGESLGLIDVKRGTKVGGARFYYLTGDGAFLQLGMLNLAAQKARENGFQLMIPPVLVRPEVMSGTGFLGAHSDEIYYLERDDLYLVGTSEVALAGYHQDEIIDLSDGPIKYAGWSSCFRREAGSYGKDTRGILRVHQFDKLEMFVYCKPEEAVAQHQALLNMEREMLAAVEVPYRIIDVAGGDLGSSAARKFDTEAWIPTQNTYRELTSTSNCTTFQARRLRTRYRDESGKAHTAATLNGTLATTRWLVAILENNQQADGSVIVPEALRPFVGKEVLEPKK.

226 to 228 (TSE) is a binding site for L-serine. ATP is bound by residues 257–259 (RRE) and Val273. Residue Glu280 coordinates L-serine. 344–347 (ELTS) provides a ligand contact to ATP. Thr379 is an L-serine binding site.

The protein belongs to the class-II aminoacyl-tRNA synthetase family. Type-1 seryl-tRNA synthetase subfamily. In terms of assembly, homodimer. The tRNA molecule binds across the dimer.

It is found in the cytoplasm. It catalyses the reaction tRNA(Ser) + L-serine + ATP = L-seryl-tRNA(Ser) + AMP + diphosphate + H(+). The enzyme catalyses tRNA(Sec) + L-serine + ATP = L-seryl-tRNA(Sec) + AMP + diphosphate + H(+). It participates in aminoacyl-tRNA biosynthesis; selenocysteinyl-tRNA(Sec) biosynthesis; L-seryl-tRNA(Sec) from L-serine and tRNA(Sec): step 1/1. Functionally, catalyzes the attachment of serine to tRNA(Ser). Is also able to aminoacylate tRNA(Sec) with serine, to form the misacylated tRNA L-seryl-tRNA(Sec), which will be further converted into selenocysteinyl-tRNA(Sec). The polypeptide is Serine--tRNA ligase (Corynebacterium diphtheriae (strain ATCC 700971 / NCTC 13129 / Biotype gravis)).